The sequence spans 189 residues: Protein GrpE (189 aa).

The segment at 1-21 is disordered; it reads MADEQNLDNQNPETPEQSQAD. The segment covering 7–20 has biased composition (polar residues); sequence LDNQNPETPEQSQA.

It belongs to the GrpE family. Homodimer.

It is found in the cytoplasm. Its function is as follows. Participates actively in the response to hyperosmotic and heat shock by preventing the aggregation of stress-denatured proteins, in association with DnaK and GrpE. It is the nucleotide exchange factor for DnaK and may function as a thermosensor. Unfolded proteins bind initially to DnaJ; upon interaction with the DnaJ-bound protein, DnaK hydrolyzes its bound ATP, resulting in the formation of a stable complex. GrpE releases ADP from DnaK; ATP binding to DnaK triggers the release of the substrate protein, thus completing the reaction cycle. Several rounds of ATP-dependent interactions between DnaJ, DnaK and GrpE are required for fully efficient folding. The protein is Protein GrpE of Stutzerimonas stutzeri (strain A1501) (Pseudomonas stutzeri).